A 362-amino-acid polypeptide reads, in one-letter code: Peptide chain release factor 1 (362 aa).

Q240 carries the N5-methylglutamine modification.

The protein belongs to the prokaryotic/mitochondrial release factor family. In terms of processing, methylated by PrmC. Methylation increases the termination efficiency of RF1.

Its subcellular location is the cytoplasm. Functionally, peptide chain release factor 1 directs the termination of translation in response to the peptide chain termination codons UAG and UAA. The protein is Peptide chain release factor 1 of Bifidobacterium longum (strain DJO10A).